The primary structure comprises 284 residues: Diaminopimelate epimerase (284 aa).

Substrate contacts are provided by N20, Q53, and N73. The active-site Proton donor is the C82. Substrate is bound by residues 83 to 84 (GN), N167, N200, and 218 to 219 (ER). C227 serves as the catalytic Proton acceptor. A substrate-binding site is contributed by 228–229 (GS).

Belongs to the diaminopimelate epimerase family. In terms of assembly, homodimer.

It localises to the cytoplasm. The enzyme catalyses (2S,6S)-2,6-diaminopimelate = meso-2,6-diaminopimelate. The protein operates within amino-acid biosynthesis; L-lysine biosynthesis via DAP pathway; DL-2,6-diaminopimelate from LL-2,6-diaminopimelate: step 1/1. Catalyzes the stereoinversion of LL-2,6-diaminopimelate (L,L-DAP) to meso-diaminopimelate (meso-DAP), a precursor of L-lysine and an essential component of the bacterial peptidoglycan. This chain is Diaminopimelate epimerase, found in Xylella fastidiosa (strain M12).